Consider the following 256-residue polypeptide: Protein FixA (256 aa).

Belongs to the ETF beta-subunit/FixA family. Heterodimer of FixA and FixB.

It functions in the pathway amine and polyamine metabolism; carnitine metabolism. Its function is as follows. Required for anaerobic carnitine reduction. May bring reductant to CaiA. This is Protein FixA from Escherichia fergusonii (strain ATCC 35469 / DSM 13698 / CCUG 18766 / IAM 14443 / JCM 21226 / LMG 7866 / NBRC 102419 / NCTC 12128 / CDC 0568-73).